The sequence spans 528 residues: Butyrophilin subfamily 2 member A2 (528 aa).

Positions 1–29 are cleaved as a signal peptide; the sequence is MESAAALHFSRPASLLLLLLLSLCALVSA. Residues 30 to 249 lie on the Extracellular side of the membrane; that stretch reads QVTVVGPTDP…SFMPSVSPCA (220 aa). The Ig-like V-type domain occupies 31 to 142; sequence VTVVGPTDPI…SYDEAILHLI (112 aa). Residues N47, N115, and N121 are each glycosylated (N-linked (GlcNAc...) asparagine). Cysteines 52 and 126 form a disulfide. An Ig-like C2-type domain is found at 150–232; it reads PLIEMRGHED…NNTLLSQKKE (83 aa). A helical transmembrane segment spans residues 250–270; it reads VALPIVVVILMILFAVCMYWI. A coiled-coil region spans residues 270-320; that stretch reads INKLQKEKKILSGEKEFERETREIAVKELEKERVQKEEELQVKEKLQEELR. Topologically, residues 271 to 528 are cytoplasmic; it reads NKLQKEKKIL…LHRVGTHQSL (258 aa). A B30.2/SPRY domain is found at 311–507; that stretch reads VKEKLQEELR…IFICPALTGA (197 aa).

This sequence belongs to the immunoglobulin superfamily. BTN/MOG family. N-glycosylated.

The protein localises to the membrane. Functionally, inhibits the proliferation of CD4 and CD8 T-cells activated by anti-CD3 antibodies, T-cell metabolism and IL2 and IFNG secretion. This chain is Butyrophilin subfamily 2 member A2 (BTN2A2), found in Pongo abelii (Sumatran orangutan).